The primary structure comprises 365 residues: DNA replication and repair protein RecF (365 aa).

30–37 (GRNAQGKT) provides a ligand contact to ATP.

Belongs to the RecF family.

The protein localises to the cytoplasm. In terms of biological role, the RecF protein is involved in DNA metabolism; it is required for DNA replication and normal SOS inducibility. RecF binds preferentially to single-stranded, linear DNA. It also seems to bind ATP. This Streptococcus pneumoniae (strain CGSP14) protein is DNA replication and repair protein RecF.